The following is a 520-amino-acid chain: Leucine aminopeptidase 1 (520 aa).

2 residues coordinate Mn(2+): Lys288 and Asp293. Lys300 is a catalytic residue. Positions 313, 373, and 375 each coordinate Mn(2+). Residue Arg377 is part of the active site.

This sequence belongs to the peptidase M17 family. As to quaternary structure, homohexamer (dimer of homotrimers). Requires Mn(2+) as cofactor.

It localises to the cytoplasm. The catalysed reaction is Release of an N-terminal amino acid, Xaa-|-Yaa-, in which Xaa is preferably Leu, but may be other amino acids including Pro although not Arg or Lys, and Yaa may be Pro. Amino acid amides and methyl esters are also readily hydrolyzed, but rates on arylamides are exceedingly low.. It carries out the reaction Release of N-terminal proline from a peptide.. Functionally, presumably involved in the processing and regular turnover of intracellular proteins. Catalyzes the removal of unsubstituted N-terminal amino acids from various peptides. Possesses leucine aminopeptidase activity against the model substrate leucine-amido methyl coumarin. Possesses Cys-Gly dipeptidase activity. In addition, can cleave Cys-Leu and Leu-Cys dipeptides. Functions as a molecular chaperone to protect proteins from heat-induced damage. The polypeptide is Leucine aminopeptidase 1 (Arabidopsis thaliana (Mouse-ear cress)).